A 227-amino-acid polypeptide reads, in one-letter code: Germin-like protein subfamily 3 member 2 (227 aa).

An N-terminal signal peptide occupies residues 1–24 (MEANTLFLLKALCLLCFNVCFTLA). A disulfide bridge connects residues C34 and C54. N-linked (GlcNAc...) asparagine glycans are attached at residues N56 and N75. A Cupin type-1 domain is found at 68-213 (SGLKTAGNFT…AFGLSLKQIG (146 aa)). Mn(2+) is bound by residues H115, H117, E122, and H161.

Belongs to the germin family. Oligomer (believed to be a pentamer but probably hexamer).

Its subcellular location is the secreted. It localises to the extracellular space. The protein resides in the apoplast. May play a role in plant defense. Probably has no oxalate oxidase activity even if the active site is conserved. This chain is Germin-like protein subfamily 3 member 2, found in Arabidopsis thaliana (Mouse-ear cress).